Reading from the N-terminus, the 221-residue chain is Iron-sulfur cluster repair protein YtfE (221 aa).

This sequence belongs to the RIC family. YtfE subfamily. In terms of assembly, homodimer.

The protein localises to the cytoplasm. Functionally, di-iron-containing protein involved in the repair of iron-sulfur clusters damaged by oxidative and nitrosative stress conditions. This is Iron-sulfur cluster repair protein YtfE from Cronobacter sakazakii (strain ATCC BAA-894) (Enterobacter sakazakii).